Consider the following 238-residue polypeptide: Riboflavin synthase (238 aa).

Lumazine-binding repeat units lie at residues 1–103 and 104–205; these read MFTG…FGGH and YVQG…EKQI. 2,4-dihydroxypteridine contacts are provided by residues 4 to 6, 54 to 56, and 68 to 73; these read GIV, CLT, and GISPET. Ser-95 bears the Phosphoserine mark. Residues 107–109, Lys-143, 152–154, and 170–175 each bind 2,4-dihydroxypteridine; these read GHV, SLT, and SMIKHT.

In terms of assembly, homotrimer.

It carries out the reaction 2 6,7-dimethyl-8-(1-D-ribityl)lumazine + H(+) = 5-amino-6-(D-ribitylamino)uracil + riboflavin. Its pathway is cofactor biosynthesis; riboflavin biosynthesis; riboflavin from 2-hydroxy-3-oxobutyl phosphate and 5-amino-6-(D-ribitylamino)uracil: step 2/2. Functionally, catalyzes the dismutation of two molecules of 6,7-dimethyl-8-ribityllumazine, resulting in the formation of riboflavin and 5-amino-6-(D-ribitylamino)uracil. This chain is Riboflavin synthase, found in Saccharomyces cerevisiae (strain ATCC 204508 / S288c) (Baker's yeast).